A 611-amino-acid chain; its full sequence is ATP-dependent zinc metalloprotease FtsH 1 (611 aa).

The Cytoplasmic segment spans residues 1–6; the sequence is MNDNNK. The helical transmembrane segment at 7-27 threads the bilayer; that stretch reads IIRSMVLYLLIFIAIYAMVQL. The Extracellular segment spans residues 28-107; the sequence is YSQSTEPITD…KSEPQVGPPW (80 aa). A helical transmembrane segment spans residues 108-128; the sequence is WVQMLPSLFLIVIFIIFWYIF. 124-131 contributes to the ATP binding site; sequence FWYIFMQQ. Residues 129-611 are Cytoplasmic-facing; that stretch reads MQQAQGGGGS…GEDIEGVQFA (483 aa). Histidine 423 lines the Zn(2+) pocket. The active site involves glutamate 424. 2 residues coordinate Zn(2+): histidine 427 and aspartate 499.

It in the central section; belongs to the AAA ATPase family. This sequence in the C-terminal section; belongs to the peptidase M41 family. Homohexamer. Zn(2+) is required as a cofactor.

The protein localises to the cell membrane. Its function is as follows. Acts as a processive, ATP-dependent zinc metallopeptidase for both cytoplasmic and membrane proteins. Plays a role in the quality control of integral membrane proteins. The protein is ATP-dependent zinc metalloprotease FtsH 1 of Thermoanaerobacter sp. (strain X514).